Here is a 383-residue protein sequence, read N- to C-terminus: Delta(12)-fatty-acid desaturase (383 aa).

The segment at 1-24 (MGAGGRMPVPTSSKKSETDTTKRV) is disordered. Positions 14–24 (KKSETDTTKRV) are enriched in basic and acidic residues. The chain crosses the membrane as a helical span at residues 56-76 (LISDIIIASCFYYVATNYFSL). Residues 105 to 109 (HECGH) carry the Histidine box-1 motif. The chain crosses the membrane as a helical span at residues 117-137 (WLDDTVGLIFHSFLLVPYFSW). Residues 141 to 145 (HRRHH) carry the Histidine box-2 motif. 3 helical membrane-spanning segments follow: residues 179–199 (IMML…FNVS), 225–245 (IYLS…YAAA), and 252–272 (ICLY…ITYL). The short motif at 315-319 (HVAHH) is the Histidine box-3 element.

This sequence belongs to the fatty acid desaturase type 1 family. In terms of assembly, homo- and heterodimer. Interacts with FAD3 but not with FAD6. FAD2-FAD3 heterodimers can form a metabolic channel in which 18:1-PC is converted to 18:3-PC without releasing a free 18:2-PC intermediate. In terms of tissue distribution, expressed in shoots and roots. Expressed in leaves, stems, flowers and siliques.

Its subcellular location is the endoplasmic reticulum membrane. It is found in the microsome membrane. The enzyme catalyses (9Z)-octadecenoyl-CoA + 2 Fe(II)-[cytochrome b5] + O2 + 2 H(+) = (9Z,12Z)-octadecadienoyl-CoA + 2 Fe(III)-[cytochrome b5] + 2 H2O. It catalyses the reaction (9Z)-hexadecenoyl-CoA + 2 Fe(II)-[cytochrome b5] + O2 + 2 H(+) = (9Z,12Z)-hexadecadienoyl-CoA + 2 Fe(III)-[cytochrome b5] + 2 H2O. The catalysed reaction is a (9Z)-octadecenoyl-containing glycerolipid + 2 Fe(II)-[cytochrome b5] + O2 + 2 H(+) = a (9Z,12Z)-octadecadienoyl-containing glycerolipid + 2 Fe(III)-[cytochrome b5] + 2 H2O. It carries out the reaction (9Z)-octadecenoyl-CoA + AH2 + O2 = (9Z,12Z)-octadecadienoyl-CoA + A + 2 H2O. The enzyme catalyses (9Z)-hexadecenoyl-CoA + AH2 + O2 = (9Z,12Z)-hexadecadienoyl-CoA + A + 2 H2O. It catalyses the reaction (9Z)-tetradecenoyl-CoA + 2 Fe(II)-[cytochrome b5] + O2 + 2 H(+) = (9Z,12Z)-tetradecadienoyl-CoA + 2 Fe(III)-[cytochrome b5] + 2 H2O. The catalysed reaction is (9Z)-pentadecenoyl-CoA + 2 Fe(II)-[cytochrome b5] + O2 + 2 H(+) = (9Z,12Z)-pentadecadienoyl-CoA + 2 Fe(III)-[cytochrome b5] + 2 H2O. It carries out the reaction (9Z)-heptadecenoyl-CoA + 2 Fe(II)-[cytochrome b5] + O2 + 2 H(+) = (9Z,12Z)-heptadecadienoyl-CoA + 2 Fe(III)-[cytochrome b5] + 2 H2O. It participates in lipid metabolism; polyunsaturated fatty acid biosynthesis. Its function is as follows. ER (microsomal) omega-6 fatty acid desaturase introduces the second double bond in the biosynthesis of 18:3 fatty acids, important constituents of plant membranes. Delta(12)-desaturase with regioselectivity determined by the double bond (delta(9) position) and carboxyl group of the substrate. Can use both 16:1 and 18:1 fatty acids as substrates. It is thought to use cytochrome b5 as an electron donor and to act on fatty acids esterified to phosphatidylcholine (PC) and, possibly, other phospholipids. Very low constitutive hydroxylation activity. Required for desaturation of fatty acids present in extraplastidial membranes, including mitochondria. Required for salt tolerance during seed germination and early seedling growth. The polypeptide is Delta(12)-fatty-acid desaturase (Arabidopsis thaliana (Mouse-ear cress)).